The primary structure comprises 232 residues: Ornithine carbamoyltransferase (232 aa).

Carbamoyl phosphate is bound by residues Q15, R39, and 66-69; that span reads HPTQ. L-ornithine-binding positions include N99, D163, and 167 to 168; that span reads SM. Carbamoyl phosphate contacts are provided by residues 204–207 and T232; that span reads HCLP.

This sequence belongs to the aspartate/ornithine carbamoyltransferase superfamily. OTCase family.

Its subcellular location is the cytoplasm. It carries out the reaction carbamoyl phosphate + L-ornithine = L-citrulline + phosphate + H(+). It participates in amino-acid biosynthesis; L-arginine biosynthesis; L-arginine from L-ornithine and carbamoyl phosphate: step 1/3. In Neisseria animalis, this protein is Ornithine carbamoyltransferase (argF).